Here is a 547-residue protein sequence, read N- to C-terminus: RING finger protein ETP1 homolog (547 aa).

The RING-type zinc finger occupies Cys208 to Arg248. The UBP-type; degenerate zinc-finger motif lies at Pro245–Gly338. Positions 262, 265, 274, 277, 282, 289, 293, and 299 each coordinate Zn(2+). Residues Leu514–Asn523 show a composition bias toward polar residues. The tract at residues Leu514–Asp547 is disordered. Positions Lys526–Pro535 are enriched in basic residues.

The protein localises to the cytoplasm. In terms of biological role, may act as a cytoplasmic retention protein with a role in regulating nuclear transport. The chain is RING finger protein ETP1 homolog from Schizosaccharomyces pombe (strain 972 / ATCC 24843) (Fission yeast).